The primary structure comprises 286 residues: Pyridoxal kinase PdxY (286 aa).

Residues S9 and 44–45 (TQ) each bind substrate. D111, E148, and K181 together coordinate ATP. D222 contacts substrate.

This sequence belongs to the pyridoxine kinase family. PdxY subfamily. As to quaternary structure, homodimer. Mg(2+) is required as a cofactor.

It catalyses the reaction pyridoxal + ATP = pyridoxal 5'-phosphate + ADP + H(+). It participates in cofactor metabolism; pyridoxal 5'-phosphate salvage; pyridoxal 5'-phosphate from pyridoxal: step 1/1. Pyridoxal kinase involved in the salvage pathway of pyridoxal 5'-phosphate (PLP). Catalyzes the phosphorylation of pyridoxal to PLP. The protein is Pyridoxal kinase PdxY of Histophilus somni (strain 129Pt) (Haemophilus somnus).